The chain runs to 373 residues: 4-hydroxy-3-methylbut-2-en-1-yl diphosphate synthase (flavodoxin) (373 aa).

Positions 270, 273, 305, and 312 each coordinate [4Fe-4S] cluster.

It belongs to the IspG family. [4Fe-4S] cluster is required as a cofactor.

It catalyses the reaction (2E)-4-hydroxy-3-methylbut-2-enyl diphosphate + oxidized [flavodoxin] + H2O + 2 H(+) = 2-C-methyl-D-erythritol 2,4-cyclic diphosphate + reduced [flavodoxin]. It functions in the pathway isoprenoid biosynthesis; isopentenyl diphosphate biosynthesis via DXP pathway; isopentenyl diphosphate from 1-deoxy-D-xylulose 5-phosphate: step 5/6. Converts 2C-methyl-D-erythritol 2,4-cyclodiphosphate (ME-2,4cPP) into 1-hydroxy-2-methyl-2-(E)-butenyl 4-diphosphate. The chain is 4-hydroxy-3-methylbut-2-en-1-yl diphosphate synthase (flavodoxin) from Photorhabdus laumondii subsp. laumondii (strain DSM 15139 / CIP 105565 / TT01) (Photorhabdus luminescens subsp. laumondii).